The primary structure comprises 235 residues: Glycerol-3-phosphate acyltransferase (235 aa).

Helical transmembrane passes span 4–24, 56–76, 94–114, 122–142, 152–172, and 191–211; these read LIAI…IMAG, AVTL…VAFF, LLAG…GFKG, AGML…IFLL, VASI…KYIF, and FHDS…LAIL.

The protein belongs to the PlsY family. In terms of assembly, probably interacts with PlsX.

Its subcellular location is the cell inner membrane. The catalysed reaction is an acyl phosphate + sn-glycerol 3-phosphate = a 1-acyl-sn-glycero-3-phosphate + phosphate. It participates in lipid metabolism; phospholipid metabolism. Functionally, catalyzes the transfer of an acyl group from acyl-phosphate (acyl-PO(4)) to glycerol-3-phosphate (G3P) to form lysophosphatidic acid (LPA). This enzyme utilizes acyl-phosphate as fatty acyl donor, but not acyl-CoA or acyl-ACP. This Chlorobium phaeobacteroides (strain DSM 266 / SMG 266 / 2430) protein is Glycerol-3-phosphate acyltransferase.